The sequence spans 493 residues: Probable cytosol aminopeptidase (493 aa).

Mn(2+)-binding residues include lysine 257 and aspartate 262. Lysine 269 is an active-site residue. Residues aspartate 281, aspartate 341, and glutamate 343 each coordinate Mn(2+). Arginine 345 is a catalytic residue.

This sequence belongs to the peptidase M17 family. Requires Mn(2+) as cofactor.

The protein resides in the cytoplasm. The catalysed reaction is Release of an N-terminal amino acid, Xaa-|-Yaa-, in which Xaa is preferably Leu, but may be other amino acids including Pro although not Arg or Lys, and Yaa may be Pro. Amino acid amides and methyl esters are also readily hydrolyzed, but rates on arylamides are exceedingly low.. The enzyme catalyses Release of an N-terminal amino acid, preferentially leucine, but not glutamic or aspartic acids.. In terms of biological role, presumably involved in the processing and regular turnover of intracellular proteins. Catalyzes the removal of unsubstituted N-terminal amino acids from various peptides. This Prochlorococcus marinus (strain MIT 9211) protein is Probable cytosol aminopeptidase.